The following is a 665-amino-acid chain: Macrolide export ATP-binding/permease protein MacB (665 aa).

Residues 17 to 255 (MQVKGLIREF…AAQPASIIDK (239 aa)) enclose the ABC transporter domain. 53-60 (GQSGSGKS) contacts ATP. 4 consecutive transmembrane segments (helical) span residues 287 to 307 (LLTMLGIIIGIASVVSVVGLG), 544 to 564 (IAIISLIVGGIGVMNIMLVSV), 588 to 608 (FLIEAILVCILGGLLGIGLAF), and 630 to 650 (SIIAAFVCSTLIGVVFGFLPA).

Belongs to the ABC transporter superfamily. Macrolide exporter (TC 3.A.1.122) family. In terms of assembly, homodimer. Part of the tripartite efflux system MacAB-TolC, which is composed of an inner membrane transporter, MacB, a periplasmic membrane fusion protein, MacA, and an outer membrane component, TolC. The complex forms a large protein conduit and can translocate molecules across both the inner and outer membranes. Interacts with MacA.

It localises to the cell inner membrane. Part of the tripartite efflux system MacAB-TolC. MacB is a non-canonical ABC transporter that contains transmembrane domains (TMD), which form a pore in the inner membrane, and an ATP-binding domain (NBD), which is responsible for energy generation. Confers resistance against macrolides. The polypeptide is Macrolide export ATP-binding/permease protein MacB (Psychrobacter cryohalolentis (strain ATCC BAA-1226 / DSM 17306 / VKM B-2378 / K5)).